The chain runs to 290 residues: 4-hydroxybenzoate octaprenyltransferase (290 aa).

Helical transmembrane passes span 23–43, 46–66, 99–119, 141–161, 163–183, 212–232, 233–253, and 268–288; these read IGALLLLWPTLWALWVATPGM, LWILAVFVAGVWLMRAAGCVV, LFVVLVLLAFLLVLTLNAMTI, LPQVVLGAAFGWSIPMAFAAV, ESLPLSCWLMFLANILWAVAY, TLIIGILQLGVMALMALIGWL, NGLGGGYYWAVLVAGALFVYQ, and AFMNNNYVGLVLFLGLAMSYW.

The protein belongs to the UbiA prenyltransferase family. Requires Mg(2+) as cofactor.

Its subcellular location is the cell inner membrane. The enzyme catalyses all-trans-octaprenyl diphosphate + 4-hydroxybenzoate = 4-hydroxy-3-(all-trans-octaprenyl)benzoate + diphosphate. The protein operates within cofactor biosynthesis; ubiquinone biosynthesis. Functionally, catalyzes the prenylation of para-hydroxybenzoate (PHB) with an all-trans polyprenyl group. Mediates the second step in the final reaction sequence of ubiquinone-8 (UQ-8) biosynthesis, which is the condensation of the polyisoprenoid side chain with PHB, generating the first membrane-bound Q intermediate 3-octaprenyl-4-hydroxybenzoate. The chain is 4-hydroxybenzoate octaprenyltransferase from Salmonella paratyphi C (strain RKS4594).